Consider the following 424-residue polypeptide: Histidine--tRNA ligase (424 aa).

This sequence belongs to the class-II aminoacyl-tRNA synthetase family. In terms of assembly, homodimer.

The protein resides in the cytoplasm. It carries out the reaction tRNA(His) + L-histidine + ATP = L-histidyl-tRNA(His) + AMP + diphosphate + H(+). In Edwardsiella ictaluri (strain 93-146), this protein is Histidine--tRNA ligase.